The sequence spans 144 residues: uncharacterized protein (144 aa).

The disordered stretch occupies residues Lys-90–Met-144. Residues Lys-98 to Lys-130 show a composition bias toward basic residues.

This is an uncharacterized protein from Sputnik virophage.